Here is a 162-residue protein sequence, read N- to C-terminus: Ribosome-binding factor A (162 aa).

Residues 121–162 are disordered; the sequence is DEVARVAAGASPAGDPDPYKEPRAEDADDAEVDEPSGSRQAD. Low complexity predominate over residues 125-136; the sequence is RVAAGASPAGDP.

Belongs to the RbfA family. As to quaternary structure, monomer. Binds 30S ribosomal subunits, but not 50S ribosomal subunits or 70S ribosomes.

The protein localises to the cytoplasm. Its function is as follows. One of several proteins that assist in the late maturation steps of the functional core of the 30S ribosomal subunit. Associates with free 30S ribosomal subunits (but not with 30S subunits that are part of 70S ribosomes or polysomes). Required for efficient processing of 16S rRNA. May interact with the 5'-terminal helix region of 16S rRNA. The sequence is that of Ribosome-binding factor A from Rhodococcus jostii (strain RHA1).